Here is a 287-residue protein sequence, read N- to C-terminus: Acetyl-coenzyme A carboxylase carboxyl transferase subunit beta (287 aa).

The CoA carboxyltransferase N-terminal domain occupies 36-287; the sequence is MWVKCDRCGK…KVLYKILELH (252 aa). The Zn(2+) site is built by Cys40, Cys43, Cys59, and Cys62. A C4-type zinc finger spans residues 40 to 62; sequence CDRCGKTLYKKDLDENLKVCKFC.

It belongs to the AccD/PCCB family. As to quaternary structure, acetyl-CoA carboxylase is a heterohexamer composed of biotin carboxyl carrier protein (AccB), biotin carboxylase (AccC) and two subunits each of ACCase subunit alpha (AccA) and ACCase subunit beta (AccD). Requires Zn(2+) as cofactor.

Its subcellular location is the cytoplasm. The enzyme catalyses N(6)-carboxybiotinyl-L-lysyl-[protein] + acetyl-CoA = N(6)-biotinyl-L-lysyl-[protein] + malonyl-CoA. The protein operates within lipid metabolism; malonyl-CoA biosynthesis; malonyl-CoA from acetyl-CoA: step 1/1. Its function is as follows. Component of the acetyl coenzyme A carboxylase (ACC) complex. Biotin carboxylase (BC) catalyzes the carboxylation of biotin on its carrier protein (BCCP) and then the CO(2) group is transferred by the transcarboxylase to acetyl-CoA to form malonyl-CoA. The protein is Acetyl-coenzyme A carboxylase carboxyl transferase subunit beta of Clostridium novyi (strain NT).